We begin with the raw amino-acid sequence, 357 residues long: Prostaglandin D2 receptor-like (357 aa).

The Extracellular portion of the chain corresponds to 1–20 (MNESYRCQAATWVERGSSAT). N-linked (GlcNAc...) asparagine glycosylation occurs at asparagine 2. A helical transmembrane segment spans residues 21–41 (MGGVLFSAGLLGNLLALVLLA). Residues 42 to 57 (RSGLGSCRPGPLHPPP) lie on the Cytoplasmic side of the membrane. Residues 58–78 (SVFYVLVCGLTVTHLLGKCLI) form a helical membrane-spanning segment. At 79–106 (SPMVLAAYAQNRSLKELLPASGNQLCEA) the chain is on the extracellular side. An N-linked (GlcNAc...) asparagine glycan is attached at asparagine 89. Cysteine 104 and cysteine 182 form a disulfide bridge. Residues 107–127 (FAFLMSFFGLASTLQLLAMAL) form a helical membrane-spanning segment. At 128–149 (ECWLSLGHPFFYQRHITARRGV) the chain is on the cytoplasmic side. The chain crosses the membrane as a helical span at residues 150–170 (LVAPVAGAFSLAFCALPFAGF). At 171 to 194 (GKFVQYCPGTWCFIQMIHKKRSFS) the chain is on the extracellular side. The helical transmembrane segment at 195 to 215 (VIGFSVLYSSLMALLVLATVV) threads the bilayer. The Cytoplasmic portion of the chain corresponds to 216-261 (CNLGAMSNLYAMHRRQRHHPRRCSRDRAQSGSDYRHGSPNPLEELD). The chain crosses the membrane as a helical span at residues 262 to 282 (HFVLLALTTVLFTMCSLPLIY). Residues 283-306 (RAYYGAFKLVDRADGDSEDLQALR) lie on the Extracellular side of the membrane. The helical transmembrane segment at 307–327 (FLSVISIVDPWIFIIFRTSVF) threads the bilayer. At 328 to 357 (RMLFHKAFTRPLIYRNWCSHSWQTNMESTL) the chain is on the cytoplasmic side.

The protein belongs to the G-protein coupled receptor 1 family. In terms of tissue distribution, strongly expressed in eye and gastrointestinal tract (GIT), moderately in the brain and oviduct and weakly in the epididymis. In the eye, expressed in the epithelium of the iris and ciliary body and in photoreceptor cells of the retina. In the brain, expressed in leptomeninges, choroid plexus and spinal cord (sensory and motor neurons of the dorsal and ventral horns). In the stomach, expressed in the mucous-secreting goblet cells and the columnar epithelium. Expressed in platelets.

The protein resides in the cell membrane. Receptor for prostaglandin D2 (PGD2). The activity of this receptor is mainly mediated by G(s) proteins that stimulate adenylate cyclase, resulting in an elevation of intracellular cAMP. A mobilization of calcium is also observed, but without formation of inositol 1,4,5-trisphosphate. The protein is Prostaglandin D2 receptor-like (Ptgdrl) of Rattus norvegicus (Rat).